The sequence spans 455 residues: Nucleoside-triphosphatase (455 aa).

Glu-168 functions as the Proton acceptor in the catalytic mechanism.

The protein belongs to the GDA1/CD39 NTPase family.

The protein localises to the nucleus. The catalysed reaction is a ribonucleoside 5'-triphosphate + H2O = a ribonucleoside 5'-diphosphate + phosphate + H(+). Might be involved in RNA transport out of nuclei. The protein is Nucleoside-triphosphatase of Pisum sativum (Garden pea).